The primary structure comprises 551 residues: Thermophilic beta-amylase (551 aa).

The signal sequence occupies residues 1–32; sequence MIGAFKRLGQKLFLTLLTASLIFASSIVTANA. A substrate-binding site is contributed by D73. E80 provides a ligand contact to Ca(2+). 2 residues coordinate substrate: H113 and D121. E167 is a binding site for Ca(2+). Residue E195 is the Proton donor of the active site. Substrate contacts are provided by K310, H315, and T353. The active-site Proton acceptor is E392. Residues 393 to 394 and R423 contribute to the substrate site; that span reads NA. Residues 448 to 551 form the CBM20 domain; sequence LTPNGTIPVT…TGSVTITWQN (104 aa).

It belongs to the glycosyl hydrolase 14 family. In terms of assembly, monomer. Requires Ca(2+) as cofactor.

The enzyme catalyses Hydrolysis of (1-&gt;4)-alpha-D-glucosidic linkages in polysaccharides so as to remove successive maltose units from the non-reducing ends of the chains.. The protein is Thermophilic beta-amylase of Thermoanaerobacterium thermosulfurigenes (Clostridium thermosulfurogenes).